The chain runs to 344 residues: Heat-inducible transcription repressor HrcA (344 aa).

It belongs to the HrcA family.

Negative regulator of class I heat shock genes (grpE-dnaK-dnaJ and groELS operons). Prevents heat-shock induction of these operons. The polypeptide is Heat-inducible transcription repressor HrcA (Streptococcus sanguinis (strain SK36)).